The following is a 324-amino-acid chain: MIFSTLEHILTHISFSIVCIVITIHLITLLIDEIIKLNNSSEKGMIATFLCITVLLVTRCIYSGHLPLSDLYESLIFLSWSLSFIHIVPYFKKNKSHLSTITASSVIFTQGFATSGLLTEIHQSAILVPALQSEWLIMHVSMMILGYAALLCGSLLSVALLVLTFRKNRNLLCKKNPLLLKLTEEFSFGEIQYINEINNIFGNASFFSDNNYYRSQLIQQLDYWSYRVISLGFIFLTIGILSGAVWANEAWGSYWNWDPKETWAFITWIVFAVYLHTRTNTNLQVENSAIVASMGFLIIWICYFGVNLLGIGLHTYGSFTLTSN.

8 helical membrane-spanning segments follow: residues F15 to I35, G44 to G64, L71 to F91, L98 to L118, M143 to L163, V228 to N248, W255 to L275, and A289 to L309.

This sequence belongs to the CcmF/CycK/Ccl1/NrfE/CcsA family. As to quaternary structure, may interact with Ccs1.

It localises to the plastid. It is found in the chloroplast thylakoid membrane. In terms of biological role, required during biogenesis of c-type cytochromes (cytochrome c6 and cytochrome f) at the step of heme attachment. The polypeptide is Cytochrome c biogenesis protein CcsA (Daucus carota (Wild carrot)).